Reading from the N-terminus, the 95-residue chain is MKIEVIKKEENLLEFYLEGEDHTFANLLVETLRENPHVKFTAYTIEHPITMARKPRFRVVTDGEITPEEALEEAAKKIFERAKEVLEAWEKAVKS.

It belongs to the archaeal Rpo11/eukaryotic RPB11/RPC19 RNA polymerase subunit family. In terms of assembly, part of the RNA polymerase complex.

The protein localises to the cytoplasm. It catalyses the reaction RNA(n) + a ribonucleoside 5'-triphosphate = RNA(n+1) + diphosphate. DNA-dependent RNA polymerase (RNAP) catalyzes the transcription of DNA into RNA using the four ribonucleoside triphosphates as substrates. In Pyrococcus furiosus (strain ATCC 43587 / DSM 3638 / JCM 8422 / Vc1), this protein is DNA-directed RNA polymerase subunit Rpo11.